The primary structure comprises 31 residues: Cyclotide vpub-B (31 aa).

The cyclopeptide (Gly-Asn) cross-link spans glycine 1 to asparagine 31. 3 disulfide bridges follow: cysteine 5–cysteine 21, cysteine 9–cysteine 23, and cysteine 14–cysteine 28.

The protein belongs to the cyclotide family. Bracelet subfamily. This is a cyclic peptide.

In terms of biological role, probably participates in a plant defense mechanism. This is Cyclotide vpub-B from Viola pubescens (Downy yellow violet).